We begin with the raw amino-acid sequence, 471 residues long: MKNPLWGGRFTTSSSDIMKKINESISFDKTLYEEDIAGSIAHCKMLVNQRIISKYEGQLIIHGLEVIQNQISSGTFEFSTDLEDIHMNIEHNLKKMVGNIAGKLHTARSRNDQVATDFKLWIRKSIVKIEHYLHELQDTIINLAESHYNTIMPGFTHLQIAQPVTLGHHLMAYFEMFKRDFSRWQDLYKRMNQCPLGSAALAGTSFPIDRHFVAQELGFYSPTENSIDAVSDRDYAIEFLSNASICIMHLSRLAEEIILWCSYNFKFITLSDNITTGSSIMPQKKNPDAAELIRGKTGRIFASLNQILVVMKGLPLAYSKDMQEDKEALFDATNNLMLCIEAMNNMLSNIIINKNNMLKAAEHDYSTATDLADWLVKNLNLSFREAHETTGQIVKLAEHNQCKLHELTLEQIKTIIPSINDTVFSVLSVENSVASRTSYGGTAPTNVIEAIKKGKAYLSNIKFSQTDKNNI.

This sequence belongs to the lyase 1 family. Argininosuccinate lyase subfamily.

The protein localises to the cytoplasm. The enzyme catalyses 2-(N(omega)-L-arginino)succinate = fumarate + L-arginine. Its pathway is amino-acid biosynthesis; L-arginine biosynthesis; L-arginine from L-ornithine and carbamoyl phosphate: step 3/3. This Ehrlichia canis (strain Jake) protein is Argininosuccinate lyase.